A 211-amino-acid polypeptide reads, in one-letter code: Uracil phosphoribosyltransferase (211 aa).

Residues Arg-81, Arg-106, and 133–141 contribute to the 5-phospho-alpha-D-ribose 1-diphosphate site; that span reads DPMLATGNS. Uracil is bound by residues Ile-196 and 201-203; that span reads GDA. A 5-phospho-alpha-D-ribose 1-diphosphate-binding site is contributed by Asp-202.

Belongs to the UPRTase family. The cofactor is Mg(2+).

The catalysed reaction is UMP + diphosphate = 5-phospho-alpha-D-ribose 1-diphosphate + uracil. It participates in pyrimidine metabolism; UMP biosynthesis via salvage pathway; UMP from uracil: step 1/1. With respect to regulation, allosterically activated by GTP. In terms of biological role, catalyzes the conversion of uracil and 5-phospho-alpha-D-ribose 1-diphosphate (PRPP) to UMP and diphosphate. This is Uracil phosphoribosyltransferase from Paracoccus denitrificans (strain Pd 1222).